We begin with the raw amino-acid sequence, 585 residues long: Aspartate--tRNA ligase (585 aa).

E173 contributes to the L-aspartate binding site. Residues 197–200 (QTLK) form an aspartate region. R219 is a binding site for L-aspartate. Residues 219-221 (RDE) and Q228 contribute to the ATP site. L-aspartate is bound at residue H446. E480 contacts ATP. L-aspartate is bound at residue R487. 532–535 (GLDR) contributes to the ATP binding site.

This sequence belongs to the class-II aminoacyl-tRNA synthetase family. Type 1 subfamily. In terms of assembly, homodimer.

Its subcellular location is the cytoplasm. It catalyses the reaction tRNA(Asp) + L-aspartate + ATP = L-aspartyl-tRNA(Asp) + AMP + diphosphate. In terms of biological role, catalyzes the attachment of L-aspartate to tRNA(Asp) in a two-step reaction: L-aspartate is first activated by ATP to form Asp-AMP and then transferred to the acceptor end of tRNA(Asp). The polypeptide is Aspartate--tRNA ligase (Parabacteroides distasonis (strain ATCC 8503 / DSM 20701 / CIP 104284 / JCM 5825 / NCTC 11152)).